The following is a 206-amino-acid chain: Thymidylate kinase (206 aa).

10–17 (GIDGAGKS) lines the ATP pocket.

Belongs to the thymidylate kinase family.

It carries out the reaction dTMP + ATP = dTDP + ADP. Its function is as follows. Phosphorylation of dTMP to form dTDP in both de novo and salvage pathways of dTTP synthesis. The protein is Thymidylate kinase (tmk) of Neisseria meningitidis serogroup A / serotype 4A (strain DSM 15465 / Z2491).